We begin with the raw amino-acid sequence, 87 residues long: UPF0250 protein KPN78578_06520 (87 aa).

The protein belongs to the UPF0250 family.

In Klebsiella pneumoniae subsp. pneumoniae (strain ATCC 700721 / MGH 78578), this protein is UPF0250 protein KPN78578_06520.